Here is a 384-residue protein sequence, read N- to C-terminus: Dual-specificity RNA methyltransferase RlmN (384 aa).

E93 functions as the Proton acceptor in the catalytic mechanism. Residues 99–339 (EETRGTLCVS…TTIRKTRGDD (241 aa)) form the Radical SAM core domain. The cysteines at positions 106 and 344 are disulfide-linked. The [4Fe-4S] cluster site is built by C113, C117, and C120. S-adenosyl-L-methionine-binding positions include 170 to 171 (GE), S202, 224 to 226 (SLH), and N301. C344 acts as the S-methylcysteine intermediate in catalysis.

Belongs to the radical SAM superfamily. RlmN family. The cofactor is [4Fe-4S] cluster.

It localises to the cytoplasm. The catalysed reaction is adenosine(2503) in 23S rRNA + 2 reduced [2Fe-2S]-[ferredoxin] + 2 S-adenosyl-L-methionine = 2-methyladenosine(2503) in 23S rRNA + 5'-deoxyadenosine + L-methionine + 2 oxidized [2Fe-2S]-[ferredoxin] + S-adenosyl-L-homocysteine. The enzyme catalyses adenosine(37) in tRNA + 2 reduced [2Fe-2S]-[ferredoxin] + 2 S-adenosyl-L-methionine = 2-methyladenosine(37) in tRNA + 5'-deoxyadenosine + L-methionine + 2 oxidized [2Fe-2S]-[ferredoxin] + S-adenosyl-L-homocysteine. Functionally, specifically methylates position 2 of adenine 2503 in 23S rRNA and position 2 of adenine 37 in tRNAs. m2A2503 modification seems to play a crucial role in the proofreading step occurring at the peptidyl transferase center and thus would serve to optimize ribosomal fidelity. The chain is Dual-specificity RNA methyltransferase RlmN from Cupriavidus pinatubonensis (strain JMP 134 / LMG 1197) (Cupriavidus necator (strain JMP 134)).